The chain runs to 155 residues: Transcription antitermination protein NusB (155 aa).

The protein belongs to the NusB family.

Its function is as follows. Involved in transcription antitermination. Required for transcription of ribosomal RNA (rRNA) genes. Binds specifically to the boxA antiterminator sequence of the ribosomal RNA (rrn) operons. This Halorhodospira halophila (strain DSM 244 / SL1) (Ectothiorhodospira halophila (strain DSM 244 / SL1)) protein is Transcription antitermination protein NusB.